Consider the following 624-residue polypeptide: ATP-dependent RNA helicase MRH4, mitochondrial (624 aa).

The N-terminal 43 residues, 1–43 (MSPVASTCLLCEMRTVVWGWQPAVPQPWHFVRFASSARLARRK), are a transit peptide targeting the mitochondrion. The interval 41–120 (RRKPARMALS…KDAADKKQDG (80 aa)) is disordered. Residues 86–119 (RLPDRPIPRSDAELKRSSSDLNNKEKDAADKKQD) are compositionally biased toward basic and acidic residues. Positions 151 to 184 (TSFDQFPLLPQVREAVYANAFPTLTEISPTPIQR) match the Q motif motif. One can recognise a Helicase ATP-binding domain in the interval 212-427 (EEELFHFDQF…EKKFPEMKRL (216 aa)). Residue 225 to 232 (AETGTGKT) coordinates ATP. A DEAD box motif is present at residues 374 to 377 (DEAD). The region spanning 438 to 624 (RVQLGVVDVD…EAMFRGQALI (187 aa)) is the Helicase C-terminal domain.

The protein belongs to the DEAD box helicase family. MRH4 subfamily.

It is found in the mitochondrion. It carries out the reaction ATP + H2O = ADP + phosphate + H(+). In terms of biological role, ATP-binding RNA helicase involved in mitochondrial RNA metabolism. Required for maintenance of mitochondrial DNA. This Ajellomyces capsulatus (strain NAm1 / WU24) (Darling's disease fungus) protein is ATP-dependent RNA helicase MRH4, mitochondrial (MRH4).